A 212-amino-acid chain; its full sequence is MTSAANKRSIMTLFSDKTDIYCHQVRIVLAEKGVAYETEVVDPQVVSEDLMELNPYGTLPTLVDRDLVLFNSRIIMEYLDERFPHPPLMPVYPVARGKSRLLMLRIEQDWYPVLAKAEKGTDAERAVALKQLREEILAIAPIFTQMPYFMSEEFSLVDCYIAPLLWRMQELGVDFSGAGSKAIKAYMARVFERDSFMQSLGVSAPKNLMDEK.

The GST N-terminal domain occupies Ser9–Pro87. In terms of domain architecture, GST C-terminal spans Tyr92–Lys212.

The protein belongs to the GST superfamily. HSP26 family.

Its function is as follows. Forms an equimolar complex with the RNA polymerase holoenzyme (RNAP) but not with the core enzyme. The sequence is that of Stringent starvation protein A homolog (sspA) from Pasteurella multocida (strain Pm70).